A 156-amino-acid polypeptide reads, in one-letter code: ATP synthase subunit b 2 (156 aa).

Residues 6–26 (SMFGQAISFVIFVWLCMKYVW) traverse the membrane as a helical segment.

Belongs to the ATPase B chain family. As to quaternary structure, F-type ATPases have 2 components, F(1) - the catalytic core - and F(0) - the membrane proton channel. F(1) has five subunits: alpha(3), beta(3), gamma(1), delta(1), epsilon(1). F(0) has three main subunits: a(1), b(2) and c(10-14). The alpha and beta chains form an alternating ring which encloses part of the gamma chain. F(1) is attached to F(0) by a central stalk formed by the gamma and epsilon chains, while a peripheral stalk is formed by the delta and b chains.

The protein localises to the cell inner membrane. Its function is as follows. F(1)F(0) ATP synthase produces ATP from ADP in the presence of a proton or sodium gradient. F-type ATPases consist of two structural domains, F(1) containing the extramembraneous catalytic core and F(0) containing the membrane proton channel, linked together by a central stalk and a peripheral stalk. During catalysis, ATP synthesis in the catalytic domain of F(1) is coupled via a rotary mechanism of the central stalk subunits to proton translocation. Component of the F(0) channel, it forms part of the peripheral stalk, linking F(1) to F(0). The protein is ATP synthase subunit b 2 of Vibrio campbellii (strain ATCC BAA-1116).